The following is a 187-amino-acid chain: Cell division protein SepF (187 aa).

The interval 21–97 (EVEVPDKQQQ…ATPNNASQES (77 aa)) is disordered. Composition is skewed to polar residues over residues 38–63 (EQSQ…YTTT) and 70–97 (RMSN…SQES).

The protein belongs to the SepF family. Homodimer. Interacts with FtsZ.

Its subcellular location is the cytoplasm. Its function is as follows. Cell division protein that is part of the divisome complex and is recruited early to the Z-ring. Probably stimulates Z-ring formation, perhaps through the cross-linking of FtsZ protofilaments. Its function overlaps with FtsA. The protein is Cell division protein SepF of Staphylococcus aureus (strain Mu3 / ATCC 700698).